The primary structure comprises 372 residues: Cytochrome b (372 aa).

4 helical membrane passes run 25-45, 69-90, 105-125, and 170-190; these read FGSM…FLAI, WIMQ…YIHI, WLSG…GYVL, and FFAL…IHII. Heme b-binding residues include histidine 75 and histidine 89. Heme b-binding residues include histidine 174 and histidine 188. Histidine 193 serves as a coordination point for a ubiquinone. 4 helical membrane passes run 218 to 238, 280 to 300, 312 to 332, and 339 to 358; these read YKDM…LSFS, LGGT…PFTH, LTQT…WTAT, and FISI…IINP.

Belongs to the cytochrome b family. The cytochrome bc1 complex contains 3 respiratory subunits (MT-CYB, CYC1 and UQCRFS1), 2 core proteins (UQCRC1 and UQCRC2) and probably 6 low-molecular weight proteins. Heme b serves as cofactor.

It is found in the mitochondrion inner membrane. In terms of biological role, component of the ubiquinol-cytochrome c reductase complex (complex III or cytochrome b-c1 complex) that is part of the mitochondrial respiratory chain. The b-c1 complex mediates electron transfer from ubiquinol to cytochrome c. Contributes to the generation of a proton gradient across the mitochondrial membrane that is then used for ATP synthesis. The polypeptide is Cytochrome b (MT-CYB) (Dendroaspis polylepis polylepis (Black mamba)).